The chain runs to 880 residues: Leucine--tRNA ligase (880 aa).

Residues 46–56 (PYPSGALHMGH) carry the 'HIGH' region motif. The short motif at 638-642 (KMSKS) is the 'KMSKS' region element. An ATP-binding site is contributed by K641.

The protein belongs to the class-I aminoacyl-tRNA synthetase family.

The protein resides in the cytoplasm. The enzyme catalyses tRNA(Leu) + L-leucine + ATP = L-leucyl-tRNA(Leu) + AMP + diphosphate. This chain is Leucine--tRNA ligase, found in Xanthomonas axonopodis pv. citri (strain 306).